The following is a 77-amino-acid chain: UPF0154 protein LCK_00994 (77 aa).

A helical transmembrane segment spans residues 5-25 (FGILIFVLGLVIGLVIGFFVA). Positions 50 to 77 (SMGQKPSQKKLNQMMAQMKQQSEQSQKK) are disordered.

The protein belongs to the UPF0154 family.

It is found in the cell membrane. The sequence is that of UPF0154 protein LCK_00994 from Leuconostoc citreum (strain KM20).